We begin with the raw amino-acid sequence, 630 residues long: Biosynthetic arginine decarboxylase (630 aa).

At lysine 99 the chain carries N6-(pyridoxal phosphate)lysine. Residue 281-291 coordinates substrate; the sequence is VDIGGGLGVDY.

The protein belongs to the Orn/Lys/Arg decarboxylase class-II family. SpeA subfamily. It depends on Mg(2+) as a cofactor. The cofactor is pyridoxal 5'-phosphate.

It catalyses the reaction L-arginine + H(+) = agmatine + CO2. The protein operates within amine and polyamine biosynthesis; agmatine biosynthesis; agmatine from L-arginine: step 1/1. Functionally, catalyzes the biosynthesis of agmatine from arginine. This is Biosynthetic arginine decarboxylase from Phocaeicola vulgatus (strain ATCC 8482 / DSM 1447 / JCM 5826 / CCUG 4940 / NBRC 14291 / NCTC 11154) (Bacteroides vulgatus).